Consider the following 651-residue polypeptide: Probable potassium transport system protein Kup (651 aa).

Residues 1 to 16 (MRDSPGSKSSSERWHD) show a composition bias toward basic and acidic residues. The disordered stretch occupies residues 1–31 (MRDSPGSKSSSERWHDTMAVSDPTAEGKDES). 12 consecutive transmembrane segments (helical) span residues 38–58 (FWALTLGSVGVVFGDIGTSPL), 74–94 (VTPAIVLGVLSLILWSLFIVV), 129–149 (LLLLALGVVGASMFIGDSMIT), 168–188 (LQDYVVPLTLVILVMLFAVQS), 197–217 (AFAPVMALWFLTIAVLGVLHI), 232–252 (AIHFLLNHGLLGLVIMGLVFL), 276–296 (WFCLVLPSLLLNYFGQGALIL), 309–329 (LAPAPLILPLVILATAATVIA), 366–386 (IYLPRVNLLLLIGVLLLVLLF), 396–416 (YGIAVSTTMVADGIMGFVVVW), 423–443 (PAAAAALVVPLVVVDMMFFSA), and 448–468 (LFDGAWVPLLFGIAMVVLIWT).

This sequence belongs to the HAK/KUP transporter (TC 2.A.72) family.

The protein localises to the cell inner membrane. It catalyses the reaction K(+)(in) + H(+)(in) = K(+)(out) + H(+)(out). Functionally, transport of potassium into the cell. Likely operates as a K(+):H(+) symporter. The polypeptide is Probable potassium transport system protein Kup (Nitrobacter winogradskyi (strain ATCC 25391 / DSM 10237 / CIP 104748 / NCIMB 11846 / Nb-255)).